The chain runs to 218 residues: MGNITAKLVKDLRDKTGAGMMDCKKALNETDGNVDKALEWLRKKGIASAEKKSGRIAAEGSIGSYIHTGSRVGVLLELNCETDFVARGDIFQSLLKDVSMQVAACPNVEYVSIDEIPEDVVEKEKQIEMGRDDLSGKPEQIKEKIVEGRIAKRLNELVLLSQPYIKDSSLTVEDLVKQAAAKIGENIKVRRFTRYTLGEGIEKNQMDFAEEVASMKSN.

The interval 82–85 is involved in Mg(2+) ion dislocation from EF-Tu; it reads TDFV.

The protein belongs to the EF-Ts family.

It is found in the cytoplasm. Functionally, associates with the EF-Tu.GDP complex and induces the exchange of GDP to GTP. It remains bound to the aminoacyl-tRNA.EF-Tu.GTP complex up to the GTP hydrolysis stage on the ribosome. This Prochlorococcus marinus (strain MIT 9312) protein is Elongation factor Ts.